We begin with the raw amino-acid sequence, 127 residues long: Fluoride-specific ion channel FluC (127 aa).

A run of 4 helical transmembrane segments spans residues 4-24 (TLLA…QLGV), 35-55 (LGTL…LAFF), 71-91 (TGLC…IMFL), and 103-123 (VLLN…LVTW). Residues Gly-75 and Thr-78 each coordinate Na(+).

This sequence belongs to the fluoride channel Fluc/FEX (TC 1.A.43) family.

Its subcellular location is the cell inner membrane. It catalyses the reaction fluoride(in) = fluoride(out). Its activity is regulated as follows. Na(+) is not transported, but it plays an essential structural role and its presence is essential for fluoride channel function. Its function is as follows. Fluoride-specific ion channel. Important for reducing fluoride concentration in the cell, thus reducing its toxicity. This chain is Fluoride-specific ion channel FluC, found in Pectobacterium carotovorum subsp. carotovorum (strain PC1).